Here is a 150-residue protein sequence, read N- to C-terminus: Putative pre-16S rRNA nuclease (150 aa).

The protein belongs to the YqgF nuclease family.

It localises to the cytoplasm. Its function is as follows. Could be a nuclease involved in processing of the 5'-end of pre-16S rRNA. The chain is Putative pre-16S rRNA nuclease from Chlamydia felis (strain Fe/C-56) (Chlamydophila felis).